The primary structure comprises 169 residues: Succinate dehydrogenase cytochrome b560 subunit, mitochondrial (169 aa).

A mitochondrion-targeting transit peptide spans 1–29 (MAALLLRHVGRHCLRAHLSPQLCIRNAVP). The Mitochondrial matrix segment spans residues 30-62 (LGTTAKEEMERFWSKNTTLNRPLSPHISIYGWS). The helical transmembrane segment at 63-92 (LPMAMSICHRGTGIALSAGVSLFGLSALLV) threads the bilayer. At 93–112 (PGSFESHLEFVKSLCLGPAL) the chain is on the mitochondrial intermembrane side. The helical transmembrane segment at 113–137 (IHTAKFALVFPLMYHTWNGIRHLMW) threads the bilayer. H127 contacts heme b. The Mitochondrial matrix segment spans residues 138-144 (DLGKGLT). The chain crosses the membrane as a helical span at residues 145–166 (ISQLHQSGVAVLVLTVLSSVGL). The Mitochondrial intermembrane portion of the chain corresponds to 167 to 169 (AAM).

It belongs to the cytochrome b560 family. In terms of assembly, component of complex II composed of four subunits: the flavoprotein (FP) SDHA, iron-sulfur protein (IP) SDHB, and a cytochrome b560 composed of SDHC and SDHD. Heme b serves as cofactor. Post-translationally, the N-terminus is blocked.

The protein resides in the mitochondrion inner membrane. Its pathway is carbohydrate metabolism; tricarboxylic acid cycle. In terms of biological role, membrane-anchoring subunit of succinate dehydrogenase (SDH) that is involved in complex II of the mitochondrial electron transport chain and is responsible for transferring electrons from succinate to ubiquinone (coenzyme Q). SDH also oxidizes malate to the non-canonical enol form of oxaloacetate, enol-oxaloacetate. Enol-oxaloacetate, which is a potent inhibitor of the succinate dehydrogenase activity, is further isomerized into keto-oxaloacetate. The chain is Succinate dehydrogenase cytochrome b560 subunit, mitochondrial (SDHC) from Bos taurus (Bovine).